The sequence spans 79 residues: Conotoxin Leo-O4 (79 aa).

The signal sequence occupies residues 1–22 (MKLTCMMLVAVLFLTAWTFVTA). Residues 23–51 (NVSRNGLENLFPEERHEMMNPNAAKLNNR) constitute a propeptide that is removed on maturation. Cystine bridges form between Cys53-Cys70, Cys60-Cys74, and Cys69-Cys78.

Belongs to the conotoxin O1 superfamily. In terms of tissue distribution, expressed by the venom duct.

It localises to the secreted. The polypeptide is Conotoxin Leo-O4 (Conus leopardus (Leopard cone)).